A 220-amino-acid polypeptide reads, in one-letter code: Small ribosomal subunit protein uS3 (220 aa).

Positions 43–111 (IRSYLTKTLD…QVQLNILEVK (69 aa)) constitute a KH type-2 domain.

This sequence belongs to the universal ribosomal protein uS3 family. As to quaternary structure, part of the 30S ribosomal subunit. Forms a tight complex with proteins S10 and S14.

Its function is as follows. Binds the lower part of the 30S subunit head. Binds mRNA in the 70S ribosome, positioning it for translation. The sequence is that of Small ribosomal subunit protein uS3 from Tropheryma whipplei (strain TW08/27) (Whipple's bacillus).